We begin with the raw amino-acid sequence, 473 residues long: Calcium/calmodulin-dependent protein kinase type IV (473 aa).

Residues S12 and S13 each carry the phosphoserine; by autocatalysis modification. The Protein kinase domain maps to 46 to 300; that stretch reads FEVESELGRG…TFQALQHPWV (255 aa). ATP-binding positions include 52-60 and K75; that span reads LGRGATSIV. T57 carries an O-linked (GlcNAc) threonine glycan. An O-linked (GlcNAc) serine glycan is attached at S58. The O-linked (GlcNAc) serine glycan is linked to S137. Residue D164 is the Proton acceptor of the active site. The O-linked (GlcNAc) serine glycan is linked to S189. Residue T200 is modified to Phosphothreonine; by CaMKK1 and CaMKK2. The segment at 305 to 321 is autoinhibitory domain; sequence ANFVHMDTAQKKLQEFN. The PP2A-binding stretch occupies residues 306–323; the sequence is NFVHMDTAQKKLQEFNAR. The calmodulin-binding stretch occupies residues 322-341; the sequence is ARRKLKAAVKAVVASSRLGS. S336 bears the Phosphoserine; by autocatalysis mark. S341 is subject to Phosphoserine. Over residues 341 to 350 the composition is skewed to low complexity; the sequence is SASSSHGSIQ. Disordered regions lie at residues 341 to 368 and 445 to 473; these read SASSSHGSIQESHKASRDPSPIQDGNED and EEAAAPREGQGSSAVGFEVPQQDVILPEY. O-linked (GlcNAc) serine glycans are attached at residues S344, S345, and S356. Phosphoserine is present on S360.

The protein belongs to the protein kinase superfamily. CAMK Ser/Thr protein kinase family. CaMK subfamily. In terms of assembly, monomer. Interacts with protein phosphatase 2A (PPP2CA/PPP2CB); the interaction is mutually exclusive with binding to Ca(2+)/calmodulin. In terms of processing, phosphorylated by CaMKK1 and CaMKK2 on Thr-200. Dephosphorylated by protein phosphatase 2A. Autophosphorylated on Ser-12 and Ser-13. Post-translationally, glycosylation at Ser-189 modulates the phosphorylation of CaMK4 at Thr-200 and negatively regulates its activity toward CREB1 in basal conditions and during early inomycin stimulation. Expressed in brain, thymus, CD4 T-cells, testis and epithelial ovarian cancer tissue.

It is found in the cytoplasm. Its subcellular location is the nucleus. It catalyses the reaction L-seryl-[protein] + ATP = O-phospho-L-seryl-[protein] + ADP + H(+). The catalysed reaction is L-threonyl-[protein] + ATP = O-phospho-L-threonyl-[protein] + ADP + H(+). Activated by Ca(2+)/calmodulin. Binding of calmodulin results in conformational change that relieves intrasteric autoinhibition and allows phosphorylation of Thr-200 within the activation loop by CaMKK1 or CaMKK2. Phosphorylation of Thr-200 results in a 10-20-fold increase in total activity to generate Ca(2+)/calmodulin-independent activity. Autophosphorylation of the N-terminus Ser-12 and Ser-13 is required for full activation. Inactivated by protein phosphatase 2A (PPP2CA/PPP2CB) which dephosphorylates Thr-200, thereby terminating autonomous activity and helping to maintain the enzyme in its autoinhibited state. Its function is as follows. Calcium/calmodulin-dependent protein kinase that operates in the calcium-triggered CaMKK-CaMK4 signaling cascade and regulates, mainly by phosphorylation, the activity of several transcription activators, such as CREB1, MEF2D, JUN and RORA, which play pivotal roles in immune response, inflammation, and memory consolidation. In the thymus, regulates the CD4(+)/CD8(+) double positive thymocytes selection threshold during T-cell ontogeny. In CD4 memory T-cells, is required to link T-cell antigen receptor (TCR) signaling to the production of IL2, IFNG and IL4 (through the regulation of CREB and MEF2). Regulates the differentiation and survival phases of osteoclasts and dendritic cells (DCs). Mediates DCs survival by linking TLR4 and the regulation of temporal expression of BCL2. Phosphorylates the transcription activator CREB1 on 'Ser-133' in hippocampal neuron nuclei and contribute to memory consolidation and long term potentiation (LTP) in the hippocampus. Can activate the MAP kinases MAPK1/ERK2, MAPK8/JNK1 and MAPK14/p38 and stimulate transcription through the phosphorylation of ELK1 and ATF2. Can also phosphorylate in vitro CREBBP, PRM2, MEF2A and STMN1/OP18. The sequence is that of Calcium/calmodulin-dependent protein kinase type IV (CAMK4) from Homo sapiens (Human).